Reading from the N-terminus, the 572-residue chain is M-phase inducer phosphatase 3 (572 aa).

Disordered regions lie at residues 95–117 (NLGDETAPLPTESPDRMSSGKLE) and 304–354 (SPSM…QRRG). Residues 420-527 (LVEKFFIIDC…FFPEYKELCE (108 aa)) form the Rhodanese domain. Cys476 is a catalytic residue.

It belongs to the MPI phosphatase family.

It carries out the reaction O-phospho-L-tyrosyl-[protein] + H2O = L-tyrosyl-[protein] + phosphate. Functionally, this protein functions as a dosage-dependent inducer in mitotic control. It is a tyrosine protein phosphatase required for progression of the cell cycle. It may directly dephosphorylate p34(cdc2) and activate the p34(cdc2) kinase activity. This is M-phase inducer phosphatase 3 (cdc25-3) from Xenopus laevis (African clawed frog).